Here is a 295-residue protein sequence, read N- to C-terminus: Virginiamycin B lyase (295 aa).

Histidine 228 provides a ligand contact to substrate. Glutamate 268 is a Mg(2+) binding site. Residue histidine 270 is the Proton acceptor of the active site. Position 285 (glutamate 285) interacts with Mg(2+).

Belongs to the Vgb family. Monomer. Mg(2+) serves as cofactor.

Inactivates the type B streptogramin antibiotics by linearizing the lactone ring at the ester linkage, generating a free phenylglycine carboxylate and converting the threonyl moiety into 2-amino-butenoic acid. The protein is Virginiamycin B lyase of Clostridium beijerinckii (strain ATCC 51743 / NCIMB 8052) (Clostridium acetobutylicum).